The following is a 100-amino-acid chain: Aspartyl/glutamyl-tRNA(Asn/Gln) amidotransferase subunit C (100 aa).

Belongs to the GatC family. Heterotrimer of A, B and C subunits.

It catalyses the reaction L-glutamyl-tRNA(Gln) + L-glutamine + ATP + H2O = L-glutaminyl-tRNA(Gln) + L-glutamate + ADP + phosphate + H(+). The enzyme catalyses L-aspartyl-tRNA(Asn) + L-glutamine + ATP + H2O = L-asparaginyl-tRNA(Asn) + L-glutamate + ADP + phosphate + 2 H(+). Allows the formation of correctly charged Asn-tRNA(Asn) or Gln-tRNA(Gln) through the transamidation of misacylated Asp-tRNA(Asn) or Glu-tRNA(Gln) in organisms which lack either or both of asparaginyl-tRNA or glutaminyl-tRNA synthetases. The reaction takes place in the presence of glutamine and ATP through an activated phospho-Asp-tRNA(Asn) or phospho-Glu-tRNA(Gln). The chain is Aspartyl/glutamyl-tRNA(Asn/Gln) amidotransferase subunit C from Streptococcus agalactiae serotype Ia (strain ATCC 27591 / A909 / CDC SS700).